The chain runs to 338 residues: Ketol-acid reductoisomerase (NADP(+)) (338 aa).

Positions 1-181 constitute a KARI N-terminal Rossmann domain; sequence MKVFYDKDAD…GGGRAGIIET (181 aa). Residues 24 to 27, Arg-47, and Ser-52 contribute to the NADP(+) site; that span reads YGSQ. Residue His-107 is part of the active site. Gly-133 serves as a coordination point for NADP(+). Residues 182–327 form the KARI C-terminal knotted domain; sequence NFREETETDL…AKLRAMMPWI (146 aa). Mg(2+) is bound by residues Asp-190, Glu-194, Glu-226, and Glu-230. Substrate is bound at residue Ser-251.

It belongs to the ketol-acid reductoisomerase family. Mg(2+) is required as a cofactor.

The enzyme catalyses (2R)-2,3-dihydroxy-3-methylbutanoate + NADP(+) = (2S)-2-acetolactate + NADPH + H(+). The catalysed reaction is (2R,3R)-2,3-dihydroxy-3-methylpentanoate + NADP(+) = (S)-2-ethyl-2-hydroxy-3-oxobutanoate + NADPH + H(+). The protein operates within amino-acid biosynthesis; L-isoleucine biosynthesis; L-isoleucine from 2-oxobutanoate: step 2/4. It functions in the pathway amino-acid biosynthesis; L-valine biosynthesis; L-valine from pyruvate: step 2/4. Functionally, involved in the biosynthesis of branched-chain amino acids (BCAA). Catalyzes an alkyl-migration followed by a ketol-acid reduction of (S)-2-acetolactate (S2AL) to yield (R)-2,3-dihydroxy-isovalerate. In the isomerase reaction, S2AL is rearranged via a Mg-dependent methyl migration to produce 3-hydroxy-3-methyl-2-ketobutyrate (HMKB). In the reductase reaction, this 2-ketoacid undergoes a metal-dependent reduction by NADPH to yield (R)-2,3-dihydroxy-isovalerate. This Polynucleobacter asymbioticus (strain DSM 18221 / CIP 109841 / QLW-P1DMWA-1) (Polynucleobacter necessarius subsp. asymbioticus) protein is Ketol-acid reductoisomerase (NADP(+)).